The chain runs to 361 residues: Molybdenum import ATP-binding protein ModC (361 aa).

The ABC transporter domain maps to 1–228; sequence MLNINIEKQL…EQMRPWVPLQ (228 aa). Position 31-38 (31-38) interacts with ATP; that stretch reads GRSGAGKT. The Mop domain maps to 289-356; the sequence is GSSVRNLLRG…IKGVTMTQMD (68 aa).

This sequence belongs to the ABC transporter superfamily. Molybdate importer (TC 3.A.1.8) family. As to quaternary structure, the complex is composed of two ATP-binding proteins (ModC), two transmembrane proteins (ModB) and a solute-binding protein (ModA).

It localises to the cell inner membrane. It catalyses the reaction molybdate(out) + ATP + H2O = molybdate(in) + ADP + phosphate + H(+). Part of the ABC transporter complex ModABC involved in molybdenum import. Responsible for energy coupling to the transport system. This is Molybdenum import ATP-binding protein ModC from Shewanella sp. (strain MR-7).